A 196-amino-acid chain; its full sequence is Thymidine kinase (196 aa).

Residues 9–16 (SAMNAGKS) and 88–91 (DEAQ) contribute to the ATP site. Catalysis depends on Glu89, which acts as the Proton acceptor. Residues Cys146, Cys148, Cys183, and His186 each contribute to the Zn(2+) site.

This sequence belongs to the thymidine kinase family. As to quaternary structure, homotetramer.

It is found in the cytoplasm. The catalysed reaction is thymidine + ATP = dTMP + ADP + H(+). The chain is Thymidine kinase from Coxiella burnetii (strain RSA 493 / Nine Mile phase I).